Consider the following 408-residue polypeptide: Aminopeptidase T (408 aa).

Residues Glu250, Glu316, Glu340, His345, His376, and Asp378 each coordinate a divalent metal cation.

This sequence belongs to the peptidase M29 family. Homodimer. Co(2+) serves as cofactor. Zn(2+) is required as a cofactor. It depends on Mg(2+) as a cofactor.

Functionally, metal-dependent exopeptidase. The chain is Aminopeptidase T from Thermus thermophilus (strain ATCC 27634 / DSM 579 / HB8).